Reading from the N-terminus, the 526-residue chain is Glutamate--tRNA ligase, mitochondrial (526 aa).

The transit peptide at 1–38 (MLSYTSCAKLICSRYIVSKISFYSLKRCNSTAVVRTRF) directs the protein to the mitochondrion. Residue 37–39 (RFA) participates in L-glutamate binding. Positions 42–50 (PTGFLHLGS) match the 'HIGH' region motif. Position 47 (histidine 47) interacts with ATP. Residues glutamate 73, 222 to 226 (YHFAN), and arginine 240 contribute to the L-glutamate site. Residues glutamate 243 and 278 to 282 (KLSKR) each bind ATP. Residues 278–282 (KLSKR) carry the 'KMSKS' region motif.

This sequence belongs to the class-I aminoacyl-tRNA synthetase family. Glutamate--tRNA ligase type 1 subfamily.

It is found in the mitochondrion. It carries out the reaction tRNA(Glu) + L-glutamate + ATP = L-glutamyl-tRNA(Glu) + AMP + diphosphate. In terms of biological role, catalyzes the attachment of glutamate to tRNA(Glu) in a two-step reaction: glutamate is first activated by ATP to form Glu-AMP and then transferred to the acceptor end of tRNA(Glu). The chain is Glutamate--tRNA ligase, mitochondrial (mse1) from Schizosaccharomyces pombe (strain 972 / ATCC 24843) (Fission yeast).